The chain runs to 190 residues: Lipid A acyltransferase PagP (190 aa).

The signal sequence occupies residues 1–18 (MKRLISCLTIICALNASA). Active-site residues include His-60, Asp-103, and Ser-104.

This sequence belongs to the lipid A palmitoyltransferase family. As to quaternary structure, homodimer.

It localises to the cell outer membrane. It catalyses the reaction a lipid A + a 1,2-diacyl-sn-glycero-3-phosphocholine = a hepta-acyl lipid A + a 2-acyl-sn-glycero-3-phosphocholine. The catalysed reaction is a lipid IVA + a 1,2-diacyl-sn-glycero-3-phosphocholine = a lipid IVB + a 2-acyl-sn-glycero-3-phosphocholine. It carries out the reaction a lipid IIA + a 1,2-diacyl-sn-glycero-3-phosphocholine = a lipid IIB + a 2-acyl-sn-glycero-3-phosphocholine. Functionally, transfers a fatty acid residue from the sn-1 position of a phospholipid to the N-linked hydroxyfatty acid chain on the proximal unit of lipid A or its precursors. The polypeptide is Lipid A acyltransferase PagP (Legionella pneumophila (strain Paris)).